A 988-amino-acid polypeptide reads, in one-letter code: Exportin-T (988 aa).

It belongs to the exportin family.

Its subcellular location is the nucleus. It is found in the cytoplasm. Functionally, tRNA nucleus export receptor which facilitates tRNA translocation across the nuclear pore complex. Involved in pre-tRNA splicing, probably by affecting the interaction of pre-tRNA with splicing endonuclease. This is Exportin-T (LOS1) from Lodderomyces elongisporus (strain ATCC 11503 / CBS 2605 / JCM 1781 / NBRC 1676 / NRRL YB-4239) (Yeast).